A 308-amino-acid chain; its full sequence is Lipoyl synthase 2 (308 aa).

Residues C49, C54, C60, C75, C79, C82, and S300 each coordinate [4Fe-4S] cluster. Residues 61 to 289 (YASGTATFLL…KRIAEGLGFK (229 aa)) form the Radical SAM core domain.

The protein belongs to the radical SAM superfamily. Lipoyl synthase family. It depends on [4Fe-4S] cluster as a cofactor.

The protein localises to the cytoplasm. The enzyme catalyses [[Fe-S] cluster scaffold protein carrying a second [4Fe-4S](2+) cluster] + N(6)-octanoyl-L-lysyl-[protein] + 2 oxidized [2Fe-2S]-[ferredoxin] + 2 S-adenosyl-L-methionine + 4 H(+) = [[Fe-S] cluster scaffold protein] + N(6)-[(R)-dihydrolipoyl]-L-lysyl-[protein] + 4 Fe(3+) + 2 hydrogen sulfide + 2 5'-deoxyadenosine + 2 L-methionine + 2 reduced [2Fe-2S]-[ferredoxin]. It functions in the pathway protein modification; protein lipoylation via endogenous pathway; protein N(6)-(lipoyl)lysine from octanoyl-[acyl-carrier-protein]: step 2/2. Catalyzes the radical-mediated insertion of two sulfur atoms into the C-6 and C-8 positions of the octanoyl moiety bound to the lipoyl domains of lipoate-dependent enzymes, thereby converting the octanoylated domains into lipoylated derivatives. In Prochlorococcus marinus (strain SARG / CCMP1375 / SS120), this protein is Lipoyl synthase 2.